Consider the following 1705-residue polypeptide: Clathrin heavy chain 1 (1705 aa).

N-acetylalanine is present on Ala-2. The segment at 2–492 (AAANAPIIMK…VDNDLALKIY (491 aa)) is globular terminal domain. WD40-like repeat stretches follow at residues 25–67 (FITF…RPIT), 68–113 (ADSA…MPEQ), 114–155 (VAFW…ANLA), 156–205 (NNQI…QALE), 206–270 (AHAA…PDFA), 271–314 (DDFP…ISPD), and 315–343 (PIFL…ATVN). A binding site for the uncoating ATPase, involved in lattice disassembly region spans residues 462-478 (ENWLAEDKLECSEELGD). The segment at 493–536 (IKARATPKVVAAFAERREFDKILIYSKQVGYTPDYMFLLQTILR) is flexible linker. The distal segment stretch occupies residues 537–648 (TDPQGAVNFA…QSLKHYSELP (112 aa)). Residues 537-1705 (TDPQGAVNFA…PYGMPPMGGY (1169 aa)) form a heavy chain arm region. CHCR repeat units follow at residues 551–697 (QMEG…QIIV), 700–842 (CKEY…PEDF), 847–986 (ILSV…QLID), 993–1138 (LPES…VSDA), 1142–1283 (FIRA…FRLA), 1288–1434 (LNII…DIIN), and 1437–1580 (LNVL…KECF). Residues 653–1705 (VIVNTHAIEP…PYGMPPMGGY (1053 aa)) form a proximal segment region. The segment at 1227–1536 (AAKIIYAFIS…YIYKKAGRWK (310 aa)) is involved in binding clathrin light chain. The tract at residues 1564–1705 (AEQLLVYFIE…PYGMPPMGGY (142 aa)) is trimerization.

This sequence belongs to the clathrin heavy chain family. In terms of assembly, clathrin triskelions, composed of 3 heavy chains and 3 light chains, are the basic subunits of the clathrin coat. Interacts with SCYL2B.

The protein resides in the cytoplasmic vesicle membrane. The protein localises to the membrane. Its subcellular location is the coated pit. In terms of biological role, clathrin is the major protein of the polyhedral coat of coated pits and vesicles. Mediates endocytosis and is required for a correct polar distribution of PIN auxin transporters. The sequence is that of Clathrin heavy chain 1 from Arabidopsis thaliana (Mouse-ear cress).